We begin with the raw amino-acid sequence, 317 residues long: CTP-dependent diacylglycerol kinase 1 (317 aa).

The disordered stretch occupies residues 1–44 (MANEEELQTAESAFVTGARRYSNDYSESESSSKHSGCSTPVEGT). At 1–130 (MANEEELQTA…DVDYRNVRLP (130 aa)) the chain is on the lumenal side. The span at 23 to 38 (NDYSESESSSKHSGCS) shows a compositional bias: low complexity. Residues 131–151 (LIVGFVHVLLLDVIRLHWPAF) form a helical membrane-spanning segment. Residues 152-167 (NTLYCQVTGLLMRKKE) are Cytoplasmic-facing. Residues 168-188 (VHTYNGVLWYLLGLIFAFSFF) traverse the membrane as a helical segment. Over 189-190 (SK) the chain is Lumenal. A helical transmembrane segment spans residues 191–211 (DVALVSLFLLSWCDTAASTVG). At 212–230 (RLYGHLTPRISRNKSLAGS) the chain is on the cytoplasmic side. A helical membrane pass occupies residues 231 to 251 (LAAFVVGVISCAVFYGYFVPA). Over 252–271 (YSHVNHPGEIMWNPETSRLS) the chain is Lumenal. Residues 272–292 (LVQLSLLGGFVASLSEGIDLF) traverse the membrane as a helical segment. A topological domain (cytoplasmic) is located at residue N293. The helical transmembrane segment at 294–314 (WDDNFTIPVLSAIFMHTIIAF) threads the bilayer. At 315–317 (SQR) the chain is on the lumenal side.

It belongs to the DGK1 family. Ca(2+) serves as cofactor. Mg(2+) is required as a cofactor.

It localises to the endoplasmic reticulum membrane. The protein localises to the nucleus membrane. It carries out the reaction a 1,2-diacyl-sn-glycerol + CTP = a 1,2-diacyl-sn-glycero-3-phosphate + CDP + H(+). CTP-dependent diacylglycerol kinase that catalyzes the phosphorylation of diacylglycerol (DAG) to phosphatidate (PA). Controls phosphatidate levels at the nuclear envelope. May be involved in vesicle trafficking between the endoplasmic reticulum and the Golgi apparatus. In Eremothecium gossypii (strain ATCC 10895 / CBS 109.51 / FGSC 9923 / NRRL Y-1056) (Yeast), this protein is CTP-dependent diacylglycerol kinase 1 (DGK1).